A 313-amino-acid chain; its full sequence is Acetaldehyde dehydrogenase 1 (313 aa).

An NAD(+)-binding site is contributed by 16-19; the sequence is SGNI. Cys-131 serves as the catalytic Acyl-thioester intermediate. NAD(+) contacts are provided by residues 162 to 170 and Asn-281; that span reads SAGPGTRAN.

It belongs to the acetaldehyde dehydrogenase family.

The enzyme catalyses acetaldehyde + NAD(+) + CoA = acetyl-CoA + NADH + H(+). In Mycobacterium sp. (strain JLS), this protein is Acetaldehyde dehydrogenase 1.